The following is a 185-amino-acid chain: Thioredoxin F2, chloroplastic (185 aa).

The 126-residue stretch at 59–184 (RRIGSCVVRC…LLAAIEAARS (126 aa)) folds into the Thioredoxin domain. Active-site nucleophile residues include C109 and C112. Cysteines 109 and 112 form a disulfide. S-glutathionyl cysteine; transient is present on C136.

The protein belongs to the thioredoxin family. Plant F-type subfamily. Post-translationally, glutathionylation at Cys-136 decreases its ability to be reduced by ferredoxin-thioredoxin reductase and reduces its efficiency in activating target chloroplastic enzymes.

The protein resides in the plastid. The protein localises to the chloroplast stroma. Probable thiol-disulfide oxidoreductase involved in the redox regulation of enzymes of both reductive pentose phosphate pathway (Calvin-Benson cycle) and oxidative pentose phosphate pathway. The protein is Thioredoxin F2, chloroplastic of Arabidopsis thaliana (Mouse-ear cress).